The sequence spans 558 residues: SPATS2-like protein (558 aa).

Ala2 carries the N-acetylalanine modification. Residues Gly63–Gln79 show a composition bias toward basic residues. Disordered stretches follow at residues Gly63 to Thr148 and Asp161 to Pro202. 2 stretches are compositionally biased toward basic and acidic residues: residues Gly80–Glu92 and Gly110–Arg142. Ser120 carries the phosphoserine modification. Residues Lys279–Leu344 adopt a coiled-coil conformation. The disordered stretch occupies residues Lys383 to Ala514. The span at Asp416–Asn433 shows a compositional bias: polar residues. Ser455 bears the Phosphoserine mark. The span at His469–Gly485 shows a compositional bias: basic residues.

It belongs to the SPATS2 family.

The protein resides in the cytoplasm. It is found in the nucleus. It localises to the nucleolus. The polypeptide is SPATS2-like protein (Spats2l) (Rattus norvegicus (Rat)).